A 443-amino-acid polypeptide reads, in one-letter code: Protein king tubby (443 aa).

2 disordered regions span residues 57 to 85 and 98 to 189; these read TNGS…LSTI and HELE…ESEG. Residues 68-85 are compositionally biased toward polar residues; sequence AVNTSRNHSNNMRSLSTI. The segment covering 113–128 has biased composition (low complexity); sequence QHQQSASHSANSTQSQ. S136 is modified (phosphoserine). Positions 148–160 are enriched in low complexity; it reads NRNVAAAAPVRPA. The segment covering 177–186 has biased composition (gly residues); sequence NGTGNGTGGE.

Belongs to the TUB family.

The protein localises to the cytoplasm. The protein resides in the nucleus. It localises to the cell projection. Its subcellular location is the cilium membrane. It is found in the rhabdomere. This chain is Protein king tubby, found in Drosophila yakuba (Fruit fly).